The primary structure comprises 214 residues: Cell division protein SepF (214 aa).

The tract at residues 23-70 (YYDDRAPSRGFPRPRFDDGYGRYDGDDYDDPRREPADCPPPAGYRGGY) is disordered. The span at 36–58 (PRFDDGYGRYDGDDYDDPRREPA) shows a compositional bias: basic and acidic residues.

The protein belongs to the SepF family. In terms of assembly, homodimer. Interacts with FtsZ.

It is found in the cytoplasm. Its function is as follows. Cell division protein that is part of the divisome complex and is recruited early to the Z-ring. Probably stimulates Z-ring formation, perhaps through the cross-linking of FtsZ protofilaments. Its function overlaps with FtsA. This chain is Cell division protein SepF, found in Mycolicibacterium paratuberculosis (strain ATCC BAA-968 / K-10) (Mycobacterium paratuberculosis).